Consider the following 227-residue polypeptide: Probable GTP-binding protein EngB (227 aa).

Residues 30–219 (KKPQIIVVGR…MVKINKNVNE (190 aa)) enclose the EngB-type G domain. GTP is bound by residues 38 to 45 (GRSNVGKS), 63 to 67 (GVTLK), 80 to 83 (DLPG), 160 to 163 (NKMD), and 197 to 199 (IGI). The Mg(2+) site is built by Ser-45 and Thr-65.

This sequence belongs to the TRAFAC class TrmE-Era-EngA-EngB-Septin-like GTPase superfamily. EngB GTPase family. It depends on Mg(2+) as a cofactor.

Necessary for normal cell division and for the maintenance of normal septation. The sequence is that of Probable GTP-binding protein EngB from Methanococcus aeolicus (strain ATCC BAA-1280 / DSM 17508 / OCM 812 / Nankai-3).